Reading from the N-terminus, the 556-residue chain is Potassium-transporting ATPase potassium-binding subunit (556 aa).

The next 10 membrane-spanning stretches (helical) occupy residues 6–26 (AGLI…VPLG), 65–85 (GVLA…LVQG), 133–153 (GLAV…VALV), 176–196 (LRIL…GGAI), 249–269 (PTAW…FSLP), 283–303 (YAIA…MLWF), 378–398 (GLYG…LMVG), 419–439 (YFLV…ALPG), 483–503 (ALGL…LALA), and 526–546 (FVGM…LPML).

The protein belongs to the KdpA family. In terms of assembly, the system is composed of three essential subunits: KdpA, KdpB and KdpC.

It is found in the cell membrane. Its function is as follows. Part of the high-affinity ATP-driven potassium transport (or Kdp) system, which catalyzes the hydrolysis of ATP coupled with the electrogenic transport of potassium into the cytoplasm. This subunit binds the extracellular potassium ions and delivers the ions to the membrane domain of KdpB through an intramembrane tunnel. This is Potassium-transporting ATPase potassium-binding subunit from Mycobacterium avium (strain 104).